We begin with the raw amino-acid sequence, 349 residues long: 3-dehydroquinate synthase (349 aa).

Residues 63–68 (DGEEYK), 97–101 (GVIGD), 121–122 (TT), Lys134, Lys143, and 161–164 (FLTT) each bind NAD(+). Residues Glu176, His235, and His252 each coordinate Zn(2+).

It belongs to the sugar phosphate cyclases superfamily. Dehydroquinate synthase family. Requires Co(2+) as cofactor. Zn(2+) is required as a cofactor. NAD(+) serves as cofactor.

The protein localises to the cytoplasm. It catalyses the reaction 7-phospho-2-dehydro-3-deoxy-D-arabino-heptonate = 3-dehydroquinate + phosphate. The protein operates within metabolic intermediate biosynthesis; chorismate biosynthesis; chorismate from D-erythrose 4-phosphate and phosphoenolpyruvate: step 2/7. Functionally, catalyzes the conversion of 3-deoxy-D-arabino-heptulosonate 7-phosphate (DAHP) to dehydroquinate (DHQ). This chain is 3-dehydroquinate synthase, found in Sulfurimonas denitrificans (strain ATCC 33889 / DSM 1251) (Thiomicrospira denitrificans (strain ATCC 33889 / DSM 1251)).